We begin with the raw amino-acid sequence, 1426 residues long: Nephrocystin-4 (1426 aa).

Residue S142 is modified to Phosphoserine. Disordered stretches follow at residues G450–Q536 and R896–G935. The span at K474–V486 shows a compositional bias: pro residues. Residues S503–Q536 show a composition bias toward polar residues. The tract at residues L823–Q1426 is sufficient for basal bodies localization.

Belongs to the NPHP4 family. As to quaternary structure, interacts with NPHP1. Interacts with NPHP1 and RPGRIP1L/NPHP8; NPHP1, NPHP4 and RPGRIP1L are proposed to form a functional NPHP1-4-8 module localized to cell-cell contacts and the ciliary transition zone; NPHP4 mediates the interaction between NPHP1 and RPGRIP1L. Interacts with IQCB1/NPHP5; the interaction likely requires additional interactors. Interacts with RPGRIP1, CEP164, JADE1, PALS1, INADL, PARD6A, INVS, DVL2, LATS1. Interacts with INTU; INTU mediates the interaction between NPHP4 and DAAM1. Interacts with SPATA7. As to expression, expressed in kidney, skeletal muscle, heart and liver, and to a lesser extent in brain and lung.

The protein resides in the cytoplasm. It is found in the cytoskeleton. Its subcellular location is the cilium basal body. It localises to the microtubule organizing center. The protein localises to the centrosome. The protein resides in the cell junction. It is found in the tight junction. Its subcellular location is the nucleus. In terms of biological role, involved in the organization of apical junctions; the function is proposed to implicate a NPHP1-4-8 module. Does not seem to be strictly required for ciliogenesis. Required for building functional cilia. Involved in the organization of the subapical actin network in multiciliated epithelial cells. Seems to recruit INT to basal bodies of motile cilia which subsequently interacts with actin-modifying proteins such as DAAM1. In cooperation with INVS may down-regulate the canonical Wnt pathway and promote the Wnt-PCP pathway by regulating expression and subcellular location of disheveled proteins. Stabilizes protein levels of JADE1 and promotes its translocation to the nucleus leading to cooperative inhibition of canonical Wnt signaling. Acts as a negative regulator of the hippo pathway by association with LATS1 and modifying LATS1-dependent phosphorylation and localization of WWTR1/TAZ. The protein is Nephrocystin-4 (NPHP4) of Homo sapiens (Human).